A 539-amino-acid chain; its full sequence is 2,3-dihydroxybenzoate-AMP ligase (539 aa).

Residue Gly-191 coordinates ATP. Substrate-binding positions include His-234–Asn-235 and Ser-240. 5 residues coordinate ATP: Gly-307, Val-329, Asp-413, Arg-428, and Lys-519. Residue Lys-519 coordinates substrate.

Belongs to the ATP-dependent AMP-binding enzyme family.

The protein localises to the cytoplasm. It carries out the reaction 2,3-dihydroxybenzoate + holo-[ACP] + ATP = 2,3-dihydroxybenzoyl-[ACP] + AMP + diphosphate. It participates in siderophore biosynthesis; bacillibactin biosynthesis. Its function is as follows. Involved in the biosynthesis of the catecholic siderophore bacillibactin. Catalyzes the activation of the carboxylate group of 2,3-dihydroxy-benzoate (DHB), via ATP-dependent PPi exchange reactions, to the acyladenylate. In Bacillus subtilis (strain 168), this protein is 2,3-dihydroxybenzoate-AMP ligase.